The primary structure comprises 59 residues: Embryonic testis differentiation protein homolog A (59 aa).

The span at 1–10 (MDKEVPKGSP) shows a compositional bias: basic and acidic residues. The tract at residues 1 to 25 (MDKEVPKGSPREPALNIKKSDKSFK) is disordered.

The chain is Embryonic testis differentiation protein homolog A from Homo sapiens (Human).